Consider the following 158-residue polypeptide: Ribosomal RNA large subunit methyltransferase H (158 aa).

S-adenosyl-L-methionine contacts are provided by residues Leu74, Gly105, and 124 to 129; that span reads LGPLTL.

This sequence belongs to the RNA methyltransferase RlmH family. Homodimer.

It is found in the cytoplasm. It catalyses the reaction pseudouridine(1915) in 23S rRNA + S-adenosyl-L-methionine = N(3)-methylpseudouridine(1915) in 23S rRNA + S-adenosyl-L-homocysteine + H(+). Specifically methylates the pseudouridine at position 1915 (m3Psi1915) in 23S rRNA. In Xylella fastidiosa (strain 9a5c), this protein is Ribosomal RNA large subunit methyltransferase H.